The following is a 341-amino-acid chain: L-threonine 3-dehydrogenase (341 aa).

Cys-38 is a binding site for Zn(2+). Catalysis depends on charge relay system residues Thr-40 and His-43. Residues His-63, Glu-64, Cys-93, Cys-96, Cys-99, and Cys-107 each contribute to the Zn(2+) site. NAD(+) contacts are provided by residues Ile-175, Asp-195, Arg-200, 262 to 264, and 286 to 287; these read LGI and IY.

Belongs to the zinc-containing alcohol dehydrogenase family. Homotetramer. Requires Zn(2+) as cofactor.

It localises to the cytoplasm. The enzyme catalyses L-threonine + NAD(+) = (2S)-2-amino-3-oxobutanoate + NADH + H(+). It participates in amino-acid degradation; L-threonine degradation via oxydo-reductase pathway; glycine from L-threonine: step 1/2. Catalyzes the NAD(+)-dependent oxidation of L-threonine to 2-amino-3-ketobutyrate. This Yersinia pestis bv. Antiqua (strain Antiqua) protein is L-threonine 3-dehydrogenase.